Consider the following 26-residue polypeptide: Hemocyanin subunit 3 (26 aa).

It belongs to the tyrosinase family. Hemocyanin subfamily. In terms of tissue distribution, hemolymph.

It is found in the secreted. The protein localises to the extracellular space. Functionally, hemocyanins are copper-containing oxygen carriers occurring freely dissolved in the hemolymph of many mollusks and arthropods. The chain is Hemocyanin subunit 3 from Homarus americanus (American lobster).